The primary structure comprises 75 residues: MIGDLLLFGTLLVNAGAVLNFKLKKKESQGFGDDLTEATTGDNIREFLLSLRYFRIFIALWNIFMMFCMIVLFGS.

The N-terminal stretch at Met-1–Ala-17 is a signal peptide. Over Val-18 to Tyr-53 the chain is Extracellular. The helical transmembrane segment at Phe-54–Gly-74 threads the bilayer. Position 75 (Ser-75) is a topological domain, cytoplasmic.

The protein belongs to the SMIM7 family.

The protein localises to the membrane. The sequence is that of Small integral membrane protein 7-A (smim7-a) from Xenopus laevis (African clawed frog).